The following is a 469-amino-acid chain: ATP-dependent protease ATPase subunit HslU (469 aa).

Residues Ile24, 66–71 (GVGKTE), Asp282, Glu347, and Arg419 contribute to the ATP site.

This sequence belongs to the ClpX chaperone family. HslU subfamily. A double ring-shaped homohexamer of HslV is capped on each side by a ring-shaped HslU homohexamer. The assembly of the HslU/HslV complex is dependent on binding of ATP.

The protein resides in the cytoplasm. In terms of biological role, ATPase subunit of a proteasome-like degradation complex; this subunit has chaperone activity. The binding of ATP and its subsequent hydrolysis by HslU are essential for unfolding of protein substrates subsequently hydrolyzed by HslV. HslU recognizes the N-terminal part of its protein substrates and unfolds these before they are guided to HslV for hydrolysis. This is ATP-dependent protease ATPase subunit HslU from Listeria monocytogenes serovar 1/2a (strain ATCC BAA-679 / EGD-e).